Here is a 343-residue protein sequence, read N- to C-terminus: Methionine import ATP-binding protein MetN (343 aa).

The ABC transporter domain occupies 2–241 (IKLSNITKVF…PKTPLAQKFI (240 aa)). An ATP-binding site is contributed by 38 to 45 (GASGAGKS).

This sequence belongs to the ABC transporter superfamily. Methionine importer (TC 3.A.1.24) family. As to quaternary structure, the complex is composed of two ATP-binding proteins (MetN), two transmembrane proteins (MetI) and a solute-binding protein (MetQ).

It is found in the cell inner membrane. The catalysed reaction is L-methionine(out) + ATP + H2O = L-methionine(in) + ADP + phosphate + H(+). It catalyses the reaction D-methionine(out) + ATP + H2O = D-methionine(in) + ADP + phosphate + H(+). Functionally, part of the ABC transporter complex MetNIQ involved in methionine import. Responsible for energy coupling to the transport system. The protein is Methionine import ATP-binding protein MetN of Escherichia coli O6:K15:H31 (strain 536 / UPEC).